A 365-amino-acid chain; its full sequence is Flagellar P-ring protein (365 aa).

The N-terminal stretch at 1 to 19 is a signal peptide; the sequence is MIKFLSALILLLVTTAAQA.

Belongs to the FlgI family. The basal body constitutes a major portion of the flagellar organelle and consists of four rings (L,P,S, and M) mounted on a central rod.

The protein resides in the periplasm. The protein localises to the bacterial flagellum basal body. Its function is as follows. Assembles around the rod to form the L-ring and probably protects the motor/basal body from shearing forces during rotation. This chain is Flagellar P-ring protein, found in Shigella flexneri serotype 5b (strain 8401).